The sequence spans 329 residues: 4-hydroxythreonine-4-phosphate dehydrogenase (329 aa).

Substrate-binding residues include His136 and Thr137. The a divalent metal cation site is built by His166, His211, and His266. Lys274, Asn283, and Arg292 together coordinate substrate.

The protein belongs to the PdxA family. Homodimer. The cofactor is Zn(2+). Requires Mg(2+) as cofactor. Co(2+) serves as cofactor.

It localises to the cytoplasm. The enzyme catalyses 4-(phosphooxy)-L-threonine + NAD(+) = 3-amino-2-oxopropyl phosphate + CO2 + NADH. It functions in the pathway cofactor biosynthesis; pyridoxine 5'-phosphate biosynthesis; pyridoxine 5'-phosphate from D-erythrose 4-phosphate: step 4/5. Functionally, catalyzes the NAD(P)-dependent oxidation of 4-(phosphooxy)-L-threonine (HTP) into 2-amino-3-oxo-4-(phosphooxy)butyric acid which spontaneously decarboxylates to form 3-amino-2-oxopropyl phosphate (AHAP). This chain is 4-hydroxythreonine-4-phosphate dehydrogenase, found in Escherichia coli (strain K12 / MC4100 / BW2952).